Consider the following 414-residue polypeptide: Histidine--tRNA ligase (414 aa).

It belongs to the class-II aminoacyl-tRNA synthetase family. As to quaternary structure, homodimer.

It is found in the cytoplasm. The enzyme catalyses tRNA(His) + L-histidine + ATP = L-histidyl-tRNA(His) + AMP + diphosphate + H(+). The polypeptide is Histidine--tRNA ligase (Mycoplasma mycoides subsp. mycoides SC (strain CCUG 32753 / NCTC 10114 / PG1)).